A 461-amino-acid polypeptide reads, in one-letter code: Argininosuccinate lyase (461 aa).

It belongs to the lyase 1 family. Argininosuccinate lyase subfamily.

It localises to the cytoplasm. It carries out the reaction 2-(N(omega)-L-arginino)succinate = fumarate + L-arginine. Its pathway is amino-acid biosynthesis; L-arginine biosynthesis; L-arginine from L-ornithine and carbamoyl phosphate: step 3/3. The sequence is that of Argininosuccinate lyase from Aeromonas salmonicida (strain A449).